The sequence spans 172 residues: Ribosome maturation factor RimM (172 aa).

The 74-residue stretch at 96-169 (EGYFYHFQLQ…RMEIKLLPGL (74 aa)) folds into the PRC barrel domain.

The protein belongs to the RimM family. As to quaternary structure, binds ribosomal protein uS19.

Its subcellular location is the cytoplasm. Functionally, an accessory protein needed during the final step in the assembly of 30S ribosomal subunit, possibly for assembly of the head region. Essential for efficient processing of 16S rRNA. May be needed both before and after RbfA during the maturation of 16S rRNA. It has affinity for free ribosomal 30S subunits but not for 70S ribosomes. The protein is Ribosome maturation factor RimM of Syntrophomonas wolfei subsp. wolfei (strain DSM 2245B / Goettingen).